A 497-amino-acid polypeptide reads, in one-letter code: MTKHIIVIGGGLGGISAAIRMAQSGYSVSLYEQNNHIGGKVNRHESDGFGFDLGPSILTMPYIFEKLFEYSKKQMSDYVTIKRLPHQWRSFFPDGTTIDLYEGIKETGQHNAILSKQDIEELQNYLNYTRRIDRITEKGYFNYGLDTLSQIIKFHGPLNALINYDYVHTMQQAIDKRISNPYLRQMLGYFIKYVGSSSYDAPAVLSMLFHMQQEQGLWYVEGGIHHLANALEKLAREEGVTIHTGARVDNIKTYQRRVTGVRLDTGEFVKADYIISNMEVIPTYKYLIHLDTQRLNKLEREFEPASSGYVMHLGVACQYPQLAHHNFFFTENAYLNYQQVFHEKVLPDDPTIYLVNTNKTDHTQAPVGYENIKVLPHIPYIQDQPFTTEDYAKFRDKILDKLEKMGLTDLRKHIIYEDVWTPEDIEKNYRSNRGAIYGFVADKKKNKGFKFPKESQYFENLYFVGGSVNPGGGIPMVTLSGQQVADKINAREAKNRK.

Position 7 to 19 (7 to 19 (VIGGGLGGISAAI)) interacts with FAD.

The protein belongs to the carotenoid/retinoid oxidoreductase family. CrtP subfamily. The cofactor is FAD.

It catalyses the reaction all-trans-4,4'-diaponeurosporene + 2 AH2 + 2 O2 = 4,4'-diaponeurosporenal + 2 A + 3 H2O. Its pathway is carotenoid biosynthesis; staphyloxanthin biosynthesis; staphyloxanthin from farnesyl diphosphate: step 3/5. Involved in the biosynthesis of the yellow-orange carotenoid staphyloxanthin, which plays a role in the virulence via its protective function against oxidative stress. Catalyzes the oxidation of the terminal methyl side group of 4,4'-diaponeurosporene to form 4,4'-diaponeurosporen-4-al. This is 4,4'-diaponeurosporene oxygenase from Staphylococcus aureus (strain MW2).